The primary structure comprises 210 residues: Large ribosomal subunit protein uL3 (210 aa).

Positions 125-151 (HGFGGGPRTHGQSDRLRAPGSIGAGTD) are disordered.

Belongs to the universal ribosomal protein uL3 family. Part of the 50S ribosomal subunit. Forms a cluster with proteins L14 and L19.

One of the primary rRNA binding proteins, it binds directly near the 3'-end of the 23S rRNA, where it nucleates assembly of the 50S subunit. This is Large ribosomal subunit protein uL3 from Roseiflexus sp. (strain RS-1).